Here is a 1406-residue protein sequence, read N- to C-terminus: Receptor-type tyrosine-protein phosphatase eta (1406 aa).

The first 24 residues, 1–24 (MRRLPLLPPCPLLLLLLLPAEVRC), serve as a signal peptide directing secretion. The Extracellular portion of the chain corresponds to 25-1044 (TTACTDDCSL…LPQDPGVIAG (1020 aa)). N36, N52, N97, N103, N118, N124, N186, N192, N243, N275, N281, N296, N302, N331, N332, N364, N385, N391, N453, N459, N484, N500, N510, N547, N568, N630, N636, N651, N657, N719, N745, N750, N766, N776, N804, and N828 each carry an N-linked (GlcNAc...) asparagine glycan. Positions 39–72 (EEMGTSSNDELSVNATSGNRRLSEDVSLPGRAMS) are disordered. The segment covering 41–58 (MGTSSNDELSVNATSGNR) has biased composition (polar residues). Fibronectin type-III domains lie at 82-170 (AVLD…TKPS), 171-259 (PVLD…TKPS), 260-343 (PVLD…SLNL), 346-437 (KPSP…TKPS), 438-523 (PVLD…SLYT), 524-614 (KPTP…TKPR), 615-703 (AVLH…TKPS), 704-793 (MVLN…VPSS), 794-888 (VNAF…TDPP), and 887-979 (PPVP…IVDV). N-linked (GlcNAc...) asparagine glycosylation is present at N1010. The chain crosses the membrane as a helical span at residues 1045–1065 (AVIGCLLAILAVVAIGGYIFW). Topologically, residues 1066-1406 (RRRRKDKRNT…AFGKANGYHA (341 aa)) are cytoplasmic. One can recognise a Tyrosine-protein phosphatase domain in the interval 1110-1367 (FAEEYEELKS…VFLNQCVMDI (258 aa)). Substrate contacts are provided by residues D1274, 1308–1314 (CSAGVGR), and Q1352. C1308 functions as the Phosphocysteine intermediate in the catalytic mechanism.

Belongs to the protein-tyrosine phosphatase family. Receptor class 3 subfamily. In terms of tissue distribution, found on the apical surfaces of retinal Mueller cells, renal tubule cells and intestinal brush border cells.

It localises to the cell membrane. The protein resides in the cell projection. The protein localises to the ruffle membrane. Its subcellular location is the cell junction. The enzyme catalyses O-phospho-L-tyrosyl-[protein] + H2O = L-tyrosyl-[protein] + phosphate. Functionally, tyrosine phosphatase which dephosphorylates or contributes to the dephosphorylation of several substrates. Plays a role in cell adhesion, migration, proliferation and differentiation. Has a role in megakaryocytes and platelet formation. May influence the potential of nonsensory supporting cells to either proliferate or differentiate into hair cells. The chain is Receptor-type tyrosine-protein phosphatase eta (PTPRJ) from Gallus gallus (Chicken).